The sequence spans 104 residues: Zinc-containing ferredoxin-2 (104 aa).

The tract at residues 2–37 (GIDPNYRQNRQVVGEHEGHKIYGPVEPPGKLGIHGT) is N-terminal extension. Zn(2+) contacts are provided by histidine 17, histidine 20, and histidine 35. 2 4Fe-4S ferredoxin-type domains span residues 38 to 66 (IVGV…WFDT) and 75 to 104 (KADP…VKPP). [3Fe-4S] cluster contacts are provided by cysteine 46 and cysteine 52. Cysteine 56 is a binding site for [4Fe-4S] cluster. Aspartate 77 contributes to the Zn(2+) binding site. [4Fe-4S] cluster contacts are provided by cysteine 84, cysteine 87, and cysteine 90. Cysteine 94 is a binding site for [3Fe-4S] cluster.

It depends on [3Fe-4S] cluster as a cofactor. Requires [4Fe-4S] cluster as cofactor. Zn(2+) serves as cofactor.

Its function is as follows. Ferredoxins are iron-sulfur proteins that transfer electrons in a wide variety of metabolic reactions. The sequence is that of Zinc-containing ferredoxin-2 (zfx2) from Sulfurisphaera tokodaii (strain DSM 16993 / JCM 10545 / NBRC 100140 / 7) (Sulfolobus tokodaii).